The sequence spans 432 residues: Trigger factor (432 aa).

Positions 161–246 (DDRVTIDFVG…LKKIENMVLP (86 aa)) constitute a PPIase FKBP-type domain.

This sequence belongs to the FKBP-type PPIase family. Tig subfamily.

It localises to the cytoplasm. The enzyme catalyses [protein]-peptidylproline (omega=180) = [protein]-peptidylproline (omega=0). Functionally, involved in protein export. Acts as a chaperone by maintaining the newly synthesized protein in an open conformation. Functions as a peptidyl-prolyl cis-trans isomerase. This chain is Trigger factor, found in Haemophilus influenzae (strain 86-028NP).